Here is an 80-residue protein sequence, read N- to C-terminus: Protein FAM229B (80 aa).

The tract at residues 1-44 (MPFQFGTQPRRFPVEGGDSSIELEPGLSSSAACNGKEMSPTRQL) is disordered.

It belongs to the FAM229 family.

The chain is Protein FAM229B (FAM229B) from Homo sapiens (Human).